Reading from the N-terminus, the 394-residue chain is Probable aspartate/prephenate aminotransferase (394 aa).

The L-aspartate site is built by Gly-40, Trp-126, and Asn-176. N6-(pyridoxal phosphate)lysine is present on Lys-239. Residue Arg-370 participates in L-aspartate binding.

This sequence belongs to the class-I pyridoxal-phosphate-dependent aminotransferase family. Homodimer. Pyridoxal 5'-phosphate is required as a cofactor.

The protein resides in the cytoplasm. The catalysed reaction is L-aspartate + 2-oxoglutarate = oxaloacetate + L-glutamate. It catalyses the reaction L-arogenate + oxaloacetate = prephenate + L-aspartate. In terms of biological role, catalyzes the reversible conversion of aspartate and 2-oxoglutarate to glutamate and oxaloacetate. Can also transaminate prephenate in the presence of aspartate. The chain is Probable aspartate/prephenate aminotransferase (aspC) from Aquifex aeolicus (strain VF5).